A 590-amino-acid polypeptide reads, in one-letter code: O-fucosyltransferase 2 (590 aa).

Positions M1–D16 are enriched in basic and acidic residues. The tract at residues M1–H26 is disordered. Residues T67–S87 form a helical; Signal-anchor for type II membrane protein membrane-spanning segment. N-linked (GlcNAc...) asparagine glycosylation occurs at N125. H365–R367 is a binding site for substrate. N-linked (GlcNAc...) asparagine glycans are attached at residues N485 and N546.

This sequence belongs to the glycosyltransferase GT106 family.

The protein localises to the membrane. The protein operates within glycan metabolism. This chain is O-fucosyltransferase 2, found in Arabidopsis thaliana (Mouse-ear cress).